We begin with the raw amino-acid sequence, 142 residues long: Putative pre-16S rRNA nuclease (142 aa).

This sequence belongs to the YqgF nuclease family.

The protein localises to the cytoplasm. Functionally, could be a nuclease involved in processing of the 5'-end of pre-16S rRNA. This chain is Putative pre-16S rRNA nuclease, found in Staphylococcus carnosus (strain TM300).